We begin with the raw amino-acid sequence, 3124 residues long: Collagen alpha-1(XII) chain (3124 aa).

An N-terminal signal peptide occupies residues 1–23 (MRTALCSAVAALCAAALLSSIEA). In terms of domain architecture, Fibronectin type-III 1 spans 27–117 (PPSDLNFTII…GQLTIQTGGP (91 aa)). The N-linked (GlcNAc...) asparagine glycan is linked to Asn32. Residues 139–311 (DLVFLVDGSW…DGIVDIQNEI (173 aa)) form the VWFA 1 domain. A glycan (O-linked (Xyl...) (chondroitin sulfate) serine) is linked at Ser328. One can recognise a Fibronectin type-III 2 domain in the interval 335–424 (PASNLVATQI…ITIMEKTQQV (90 aa)). One can recognise a VWFA 2 domain in the interval 439–615 (DVVFLVDGSY…RISFELTQSV (177 aa)). 6 consecutive Fibronectin type-III domains span residues 633–722 (PAKN…LEVK), 724–815 (APRN…VRGN), 816–906 (PRNL…LEER), 908–998 (SPRN…VSQS), 999–1087 (ARTV…ASPF), and 1089–1179 (PPRN…TLSD). O-linked (Xyl...) (chondroitin sulfate) serine glycans are attached at residues Ser797, Ser890, and Ser981. 3 N-linked (GlcNAc...) asparagine glycosylation sites follow: Asn1006, Asn1032, and Asn1044. A disordered region spans residues 1075–1100 (KSRKAEGTTASPFKPPRNLRTSDSTM). A VWFA 3 domain is found at 1199–1371 (DIVLLVDGSW…SFLASIGEDV (173 aa)). Fibronectin type-III domains follow at residues 1387–1476 (PPSN…YPLS), 1477–1568 (SVRN…LPLP), 1569–1659 (GPRG…VPSP), 1660–1756 (VNLR…TPAP), 1759–1853 (GPRN…TVKN), 1854–1939 (MLVY…LERG), 1940–2030 (TPRN…LPRS), 2031–2121 (GPRN…VGLL), 2122–2210 (PPQN…LYLN), and 2211–2299 (VTDL…LKPT). Residue Asn1512 is glycosylated (N-linked (GlcNAc...) asparagine). Asn1767 carries an N-linked (GlcNAc...) asparagine glycan. 2 N-linked (GlcNAc...) asparagine glycosylation sites follow: Asn2210 and Asn2273. The VWFA 4 domain maps to 2327–2500 (DIVFLTDASW…DAFEKIQDNL (174 aa)). The tract at residues 2455 to 2750 (SGFSVFVVGV…NACTCTQDSV (296 aa)) is nonhelical region (NC3). Residues 2524–2716 (GFKMLESYNL…IQNFDIVCSP (193 aa)) enclose the Laminin G-like domain. 2 N-linked (GlcNAc...) asparagine glycosylation sites follow: Asn2532 and Asn2683. Disordered regions lie at residues 2749–2900 (SVGP…GDRG) and 2935–3080 (PNDY…EGEP). Collagen-like domains follow at residues 2751–2802 (GPPG…GPNG), 2807–2858 (GEPG…GPRG), and 2859–2900 (PPGP…GDRG). Residues 2751-2902 (GPPGPPGPPG…KGEKGDRGDI (152 aa)) form a triple-helical region (COL2) with 1 imperfection region. Pro residues-rich tracts occupy residues 2752–2761 (PPGPPGPPGG) and 2788–2798 (PPGPQGPPGPQ). The span at 2821-2830 (PGLPGRSGTP) shows a compositional bias: low complexity. Residues 2832-2841 (LPGPPGPVGP) are compositionally biased toward pro residues. 2 stretches are compositionally biased toward low complexity: residues 2842-2854 (PGERGFTGKDGPT) and 2865-2878 (APGVPGVAGPSGKP). The Cell attachment site motif lies at 2899–2901 (RGD). The tract at residues 2903 to 2945 (ASQNMMRAVARQVCEQLINGQMSRFNQMLNQIPNDYYSNRNQP) is nonhelical region (NC2). Polar residues predominate over residues 2935-2944 (PNDYYSNRNQ). Residues 2945 to 2954 (PGPPGPPGPP) show a composition bias toward pro residues. A Collagen-like 4 domain is found at 2945-2994 (PGPPGPPGPPGAAGTRGEPGPGGRPGFPGPPGVQGPPGERGMPGEKGERG). Residues 2946–3048 (GPPGPPGPPG…RGPPGPPGYC (103 aa)) are triple-helical region (COL1) with 2 imperfections. The segment covering 2961–2970 (GEPGPGGRPG) has biased composition (gly residues). A compositionally biased stretch (low complexity) spans 3010–3024 (QGESRTGPPGSTGSR). Residues 3049–3124 (DSSQCASIPY…SLSRKAKRKP (76 aa)) form a nonhelical region (NC1) region.

This sequence belongs to the fibril-associated collagens with interrupted helices (FACIT) family. Trimer of identical chains each containing 190 kDa of non-triple-helical sequences. Post-translationally, the triple-helical tail is stabilized by disulfide bonds at each end. In terms of processing, prolines at the third position of the tripeptide repeating unit (G-X-Y) are hydroxylated in some or all of the chains. O-glycosylated; glycosaminoglycan of chondroitin-sulfate type. Type XII collagen is present in tendons, ligaments, perichondrium, and periosteum, all dense connective tissues containing type I collagen.

The protein localises to the secreted. It is found in the extracellular space. The protein resides in the extracellular matrix. Type XII collagen interacts with type I collagen-containing fibrils, the COL1 domain could be associated with the surface of the fibrils, and the COL2 and NC3 domains may be localized in the perifibrillar matrix. The chain is Collagen alpha-1(XII) chain (COL12A1) from Gallus gallus (Chicken).